A 634-amino-acid chain; its full sequence is Chaperone protein HtpG (634 aa).

The interval 1 to 344 is a; substrate-binding; sequence MNETVANNKE…SNDLPLNVSR (344 aa). Residues 345–561 form a b region; it reads EILQDNKVTQ…DFEMGTQMAK (217 aa). The segment at 562–634 is c; sequence LLAAAGQAVP…TAINSLLTKG (73 aa).

It belongs to the heat shock protein 90 family. As to quaternary structure, homodimer.

The protein localises to the cytoplasm. Functionally, molecular chaperone. Has ATPase activity. The sequence is that of Chaperone protein HtpG from Vibrio vulnificus (strain YJ016).